Here is an 847-residue protein sequence, read N- to C-terminus: Collagen alpha-1(I) chain (847 aa).

The segment at 1-847 (GPMGPSGPRG…PGPIGPPGPR (847 aa)) is disordered. The span at 20–39 (PQGFQGPPGEPGEPGSSGPM) shows a compositional bias: low complexity. The segment covering 51 to 65 (NGDDGEAGKPGRPGE) has biased composition (basic and acidic residues). At Ser85 the chain carries Phosphoserine. Composition is skewed to low complexity over residues 93-109 (DAGPAGPKGEPGSPGEN) and 127-145 (PGASGPAGARGNDGATGAA). Positions 147-159 (PPGPTGPAGPPGF) are enriched in pro residues. Composition is skewed to low complexity over residues 193-208 (AGAAGPAGNPGADGQP), 219-228 (QGPSGAPGPK), 298-314 (PKGITGSPGSPGPDGKT), 334-343 (PGPKGAAGEP), 500-543 (PSGP…KGDA), 551-599 (PTGA…NAGA), and 628-638 (SPGADGPAGAP). A Phosphoserine modification is found at Ser501. Over residues 685–695 (PPGPMGPPGIA) the composition is skewed to pro residues. Positions 697-712 (PPGESGREGSPGAEGS) are enriched in low complexity. Residues 731-746 (SGPPGAPGAPGAPGPV) are compositionally biased toward pro residues. Residues 763–777 (AGPAGARGPSGPQGP) show a composition bias toward low complexity. The segment covering 778-789 (RGDKGETGEQGD) has biased composition (basic and acidic residues). Low complexity predominate over residues 793–838 (SGIQGPPGAPGSPGEQGPSGASGPAGPRGPPGSAGSPGKDGINGIP).

This sequence belongs to the fibrillar collagen family. As to quaternary structure, trimers of one alpha 2(I) and two alpha 1(I) chains. Prolines at the third position of the tripeptide repeating unit (G-X-Y) are hydroxylated in some or all of the chains. Forms the fibrils of tendon, ligaments and bones. In bones, the fibrils are mineralized with calcium hydroxyapatite.

It localises to the secreted. The protein resides in the extracellular space. It is found in the extracellular matrix. Type I collagen is a member of group I collagen (fibrillar forming collagen). The protein is Collagen alpha-1(I) chain of Cyclopes didactylus (Silky anteater).